Here is a 90-residue protein sequence, read N- to C-terminus: Neuropeptide-like 3 (90 aa).

Residues 1–16 form the signal peptide; it reads MFKLCVFVALLSLAAA. Propeptides lie at residues 17 to 54 and 67 to 79; these read APAP…LAPQ and AITQ…LLIK. An Isoleucine amide modification is found at I89.

The protein resides in the secreted. The chain is Neuropeptide-like 3 (Nplp3) from Drosophila melanogaster (Fruit fly).